We begin with the raw amino-acid sequence, 389 residues long: Migration and invasion-inhibitory protein (389 aa).

Residues 44-54 (LDYSSSSNNLE) are compositionally biased toward low complexity. 2 disordered regions span residues 44 to 80 (LDYS…WDPL) and 131 to 150 (KRPV…AQVP). Polar residues predominate over residues 58–70 (SQETSASSVAPNS). The span at 71 to 80 (QDKRHVWDPL) shows a compositional bias: basic and acidic residues. Ser309 is subject to Phosphoserine.

As to quaternary structure, interacts with IGFBP2.

In terms of biological role, inhibits glioma cells invasion and down-regulates adhesion- and motility-associated genes such as NFKB2 and ICAM1. Exhibits opposing effects to IGFBP2 on cell invasion. This is Migration and invasion-inhibitory protein (Miip) from Rattus norvegicus (Rat).